We begin with the raw amino-acid sequence, 1252 residues long: MAPSKKAGKKVTPASKKSAGQGKVAKADWKEGFKKKQVGVSDMTLLTTISNEGVNENLQKRWTNGEIYTYIGAVLISVNPFRGRSVETLQRYRGKNRLEVPPHVFGIAESAYYNMNAYHENQCVIISGESGAGKTEAAKRIMQYIAVVSGGQDSSIQEIKDMVLATNPLLESFGCAKTLRNNNSSRHGKYLEIMFNGVGEPVGAQITNYLLEKGRVVGQIENERNFHIFYQFTKGASDEQRELFGLQGPEAYAYTSLSNCLEVSDIDDVKDYHDTITAMGVIGLTPDEQNEIFKMLAIVLWLGNVQFEEMDDGNSSITDTGVTDFVGYLMEADSALVQKVLTSRVIETSKGGRRGSVYDVPLNPAQATSGRDALAKAIYNNLFEWIVSRINVSMKTRSAHAQIIGILDIFGFEIFEDNSFEQLCINYVNEKLQQIFIELTLKTEQEEYVREQIKWTPIKYFNNKIVCDLIEERRPPGIFAALNDACATAHADPAAADNSFVQRTAMLSSNAHFEARGSQFLVRHYAGDVMYNVAGMTDKNKDSLIKDLLDLVGSSGNTFLQTLFPDRPDPNSKKRPPTAGDRIKARALVDNLMKAQPSYIRTIKPNQNRSSSEYDVKAILHQIKYLGLNENIRVRRAGFAYRNTFEKMVERFYLLSSHTSYAGEYTWTGDSKSGCEQILKDTGIAKDEWQMGVTKAFIKNPETLFALETMRDKYWHNMAARIQRAFRNYMRYKHECARRIQRFWKNNKEGIAYAQTRDYGHQILAGRKERRRFSLLSYRRFMGDYLDLNGKSSLGEELAGACNIGGESVTFSSRIHLLVSKLGRSSKPSPRFIVVTEKAVHILILSVRDGQTQYNLERRIPLSTIKSIGMSNLRDDWLAKEGDPLISCYFKTELVSNLVKLTRSTVNVVIGPTIEYSKKKDKMAQIKFIKDETVAKDDLYKSHTVHVASGEPPNSVSRPPAKRKPGVVRPITQGKLLKAGGPSDKPKPRSVPKPKPVAQPLPGRDSTTVAPKPAIKPSVTPSSTVGQRPPPAPPRNIAPPPPPAKPETPMYRAKFAFEGQEGEMSLKKDDVVELVEKDDNGWWLVKMDGVEGWAPNNYLELVPPKAVSAPPPPPRSRPAPTTTPKISLTSVVADASSKPVSVFPGMQPSNGSATPWKKPLTADTTPASSRPSSAIGSKPPPPVAAKPKPPVIPVKPSVSAKGPAKPPIPTAPRPPAASTSRSSKPATAVGQVDLAAAVSLFVTHSRELLLMM.

Residues 1–27 (MAPSKKAGKKVTPASKKSAGQGKVAKA) form a disordered region. The 675-residue stretch at 38-712 (VGVSDMTLLT…TLFALETMRD (675 aa)) folds into the Myosin motor domain. 128-135 (GESGAGKT) serves as a coordination point for ATP. Ser-356 carries the phosphoserine modification. The interval 403 to 485 (IIGILDIFGF…PGIFAALNDA (83 aa)) is actin-binding. IQ domains are found at residues 716–736 (HNMA…KHEC) and 737–762 (ARRI…YGHQ). The region spanning 770 to 953 (RRRFSLLSYR…TVHVASGEPP (184 aa)) is the TH1 domain. Disordered stretches follow at residues 945 to 1049 (VHVA…PETP) and 1103 to 1228 (PPKA…PATA). Pro residues-rich tracts occupy residues 989-999 (RSVPKPKPVAQ) and 1028-1046 (RPPP…PAKP). The 59-residue stretch at 1046-1104 (PETPMYRAKFAFEGQEGEMSLKKDDVVELVEKDDNGWWLVKMDGVEGWAPNNYLELVPP) folds into the SH3 domain. A compositionally biased stretch (polar residues) spans 1162-1175 (ADTTPASSRPSSAI). Pro residues predominate over residues 1178–1193 (KPPPPVAAKPKPPVIP). The span at 1194 to 1203 (VKPSVSAKGP) shows a compositional bias: low complexity. Pro residues predominate over residues 1204–1215 (AKPPIPTAPRPP). Residues 1216–1228 (AASTSRSSKPATA) show a composition bias toward low complexity.

Belongs to the TRAFAC class myosin-kinesin ATPase superfamily. Myosin family. Phosphorylation of the TEDS site (Ser-356) is required for the polarization of the actin cytoskeleton. Phosphorylation probably activates the myosin-I ATPase activity.

Its subcellular location is the cytoplasm. The protein resides in the cytoskeleton. The protein localises to the actin patch. In terms of biological role, type-I myosin implicated in the organization of the actin cytoskeleton. Required for proper actin cytoskeleton polarization. At the cell cortex, assembles in patch-like structures together with proteins from the actin-polymerizing machinery and promotes actin assembly. Functions as actin nucleation-promoting factor (NPF) for the Arp2/3 complex. The chain is Myosin-1 (MYO1) from Laccaria bicolor (strain S238N-H82 / ATCC MYA-4686) (Bicoloured deceiver).